Reading from the N-terminus, the 1129-residue chain is Large proline-rich protein bag6 (1129 aa).

A Ubiquitin-like domain is found at 1–76; the sequence is MEVTVKTLDS…HLVERAPPQT (76 aa). 8 disordered regions span residues 69–108, 187–235, 347–402, 490–518, 550–606, 654–692, 942–967, and 987–1009; these read VERA…PERN, QPVN…SPSE, TGNG…HPHP, PAAP…VPGA, GSNT…QHLS, VPVS…ESLP, VPQA…NGAA, and VPTI…QWAA. Over residues 73–105 the composition is skewed to low complexity; that stretch reads PPQTQPSTGGPSTSSSTSPSSSNAANVPGAGAP. Composition is skewed to polar residues over residues 209–232 and 364–383; these read RETL…SHPS and HTPT…QPPS. 2 stretches are compositionally biased toward low complexity: residues 553–593 and 655–666; these read TPSS…SSGP and PVSTSPPQSASQ. Pro residues predominate over residues 667–686; that stretch reads APPPSSPSPPPAHSSPPPAA. The segment covering 947-956 has biased composition (polar residues); it reads EASSQDQPME.

Component of the bag6/bat3 complex.

It localises to the cytoplasm. It is found in the cytosol. The protein localises to the nucleus. Its subcellular location is the secreted. The protein resides in the extracellular exosome. Its function is as follows. ATP-independent molecular chaperone preventing the aggregation of misfolded and hydrophobic patches-containing proteins. Functions as part of a cytosolic protein quality control complex, the bag6/bat3 complex, which maintains these client proteins in a soluble state and participates in their proper delivery to the endoplasmic reticulum or alternatively can promote their sorting to the proteasome where they undergo degradation. The bag6/bat3 complex is involved in the post-translational delivery of tail-anchored/type II transmembrane proteins to the endoplasmic reticulum membrane. Similarly, the bag6/bat3 complex also functions as a sorting platform for proteins of the secretory pathway that are mislocalized to the cytosol either delivering them to the proteasome for degradation or to the endoplasmic reticulum. The bag6/bat3 complex also plays a role in the endoplasmic reticulum-associated degradation (ERAD), a quality control mechanism that eliminates unwanted proteins of the endoplasmic reticulum through their retrotranslocation to the cytosol and their targeting to the proteasome. It maintains these retrotranslocated proteins in an unfolded yet soluble state condition in the cytosol to ensure their proper delivery to the proteasome. Also required for selective ubiquitin-mediated degradation of defective nascent chain polypeptides by the proteasome. Also involved in endoplasmic reticulum stress-induced pre-emptive quality control, a mechanism that selectively attenuates the translocation of newly synthesized proteins into the endoplasmic reticulum and reroutes them to the cytosol for proteasomal degradation. May ensure the proper degradation of these proteins and thereby protects the endoplasmic reticulum from protein overload upon stress. By stabilizing a large spectrum of proteins, may indirectly affect different biological processes including apoptosis. By controlling the steady-state expression of the IGF1R receptor, indirectly regulates the insulin-like growth factor receptor signaling pathway. When nuclear, may also act as a component of some chromatin regulator complex. In Xenopus tropicalis (Western clawed frog), this protein is Large proline-rich protein bag6.